The following is a 59-amino-acid chain: Large ribosomal subunit protein uL30 (59 aa).

The protein belongs to the universal ribosomal protein uL30 family. As to quaternary structure, part of the 50S ribosomal subunit.

This is Large ribosomal subunit protein uL30 from Bacillus subtilis (strain 168).